The sequence spans 335 residues: NmrA-like family domain-containing oxidoreductase hkm9 (335 aa).

NADP(+) contacts are provided by residues 12–17, 38–42, 59–60, 80–82, lysine 137, and 161–164; these read GATGNQ, RNPNS, DG, INS, and YLEN.

The protein belongs to the NmrA-type oxidoreductase family.

It functions in the pathway secondary metabolite biosynthesis. Its function is as follows. NmrA-like family domain-containing oxidoreductase; part of the gene cluster that mediates the biosynthesis of hancockiamides, an unusual new family of N-cinnamoylated piperazines. The NRPS hkm10 and the NmrA-like reductase hkm9 are proposed to convert two molecules of L-Phe to the intermediary piperazine called xenocockiamide A. Xenocockiamide A is then converted to hancockiamide D via a series of hydroxylations and O-methylations. The tyrosinase hkm6 may catalyze an aromatic hydroxylation, then the 2-oxoglutarate-dependent Fe(II) dioxygenase hkm4 and the FAD-dependent phenol hydroxylase hkm7 may catalyze consecutive hydroxylations to install 2 more hydroxy groups, and the methyltransferase hkm8 probably catalyzes two methylations using 2 molecules of S-adenosyl-L-methionine (SAM). The NRPS hkm11 activates and transfers trans-cinnamate supplied by the PAL hkm12 to hancockiamide D and produces hancockiamide A. NRPS Hkm11 has the flexibility to tolerate the bulky hancockiamide G as a substrate and the absence of the acetyl-transferase hkm3 opens up the opportunity for hkm11 to introduce a second N-cinnamoyl moiety. The cytochrome P450 monooxygenase hkm5 catalyzes the methylenedioxy bridge formation, converting hancockiamide A into hancockiamide G. Hkm5 can also convert hancockiamide B into hancockiamide C, and hancockiamide D into hancockiamide H. The N-acetyltransferase hkm3 finally transfers an acetyl group to 1-N of piperazine, converting hancockiamide A into hancockiamide B and hancockiamide G into hancockiamide C. The sequence is that of NmrA-like family domain-containing oxidoreductase hkm9 from Aspergillus hancockii.